Here is a 435-residue protein sequence, read N- to C-terminus: Methylenetetrahydrofolate--tRNA-(uracil-5-)-methyltransferase TrmFO (435 aa).

7-12 (GAGLAG) contacts FAD.

The protein belongs to the MnmG family. TrmFO subfamily. FAD serves as cofactor.

The protein localises to the cytoplasm. It catalyses the reaction uridine(54) in tRNA + (6R)-5,10-methylene-5,6,7,8-tetrahydrofolate + NADH + H(+) = 5-methyluridine(54) in tRNA + (6S)-5,6,7,8-tetrahydrofolate + NAD(+). It carries out the reaction uridine(54) in tRNA + (6R)-5,10-methylene-5,6,7,8-tetrahydrofolate + NADPH + H(+) = 5-methyluridine(54) in tRNA + (6S)-5,6,7,8-tetrahydrofolate + NADP(+). In terms of biological role, catalyzes the folate-dependent formation of 5-methyl-uridine at position 54 (M-5-U54) in all tRNAs. This chain is Methylenetetrahydrofolate--tRNA-(uracil-5-)-methyltransferase TrmFO, found in Thermotoga sp. (strain RQ2).